The chain runs to 158 residues: Large ribosomal subunit protein uL30 (158 aa).

This sequence belongs to the universal ribosomal protein uL30 family. As to quaternary structure, part of the 50S ribosomal subunit.

The chain is Large ribosomal subunit protein uL30 from Saccharolobus islandicus (strain Y.G.57.14 / Yellowstone #1) (Sulfolobus islandicus).